A 179-amino-acid chain; its full sequence is Large ribosomal subunit protein uL5 (179 aa).

This sequence belongs to the universal ribosomal protein uL5 family. Part of the 50S ribosomal subunit; part of the 5S rRNA/L5/L18/L25 subcomplex. Contacts the 5S rRNA and the P site tRNA. Forms a bridge to the 30S subunit in the 70S ribosome.

Its function is as follows. This is one of the proteins that bind and probably mediate the attachment of the 5S RNA into the large ribosomal subunit, where it forms part of the central protuberance. In the 70S ribosome it contacts protein S13 of the 30S subunit (bridge B1b), connecting the 2 subunits; this bridge is implicated in subunit movement. Contacts the P site tRNA; the 5S rRNA and some of its associated proteins might help stabilize positioning of ribosome-bound tRNAs. The polypeptide is Large ribosomal subunit protein uL5 (Carboxydothermus hydrogenoformans (strain ATCC BAA-161 / DSM 6008 / Z-2901)).